A 418-amino-acid polypeptide reads, in one-letter code: Argininosuccinate synthase (418 aa).

Residues 14–22 (AYSGGLDTS) and Ala-42 contribute to the ATP site. Positions 94 and 99 each coordinate L-citrulline. Gly-124 provides a ligand contact to ATP. Residues Thr-126, Asn-130, and Asp-131 each contribute to the L-aspartate site. Position 130 (Asn-130) interacts with L-citrulline. The L-citrulline site is built by Arg-134, Ser-183, Ser-192, Glu-273, and Tyr-285.

It belongs to the argininosuccinate synthase family. Type 1 subfamily. As to quaternary structure, homotetramer.

It localises to the cytoplasm. It carries out the reaction L-citrulline + L-aspartate + ATP = 2-(N(omega)-L-arginino)succinate + AMP + diphosphate + H(+). It functions in the pathway amino-acid biosynthesis; L-arginine biosynthesis; L-arginine from L-ornithine and carbamoyl phosphate: step 2/3. The polypeptide is Argininosuccinate synthase (Colwellia psychrerythraea (strain 34H / ATCC BAA-681) (Vibrio psychroerythus)).